The primary structure comprises 509 residues: Maturase K (509 aa).

It belongs to the intron maturase 2 family. MatK subfamily.

The protein localises to the plastid. In terms of biological role, usually encoded in the trnK tRNA gene intron. Probably assists in splicing its own and other chloroplast group II introns. This is Maturase K from Cuscuta reflexa (Southern Asian dodder).